The chain runs to 1441 residues: Probable cleavage and polyadenylation specificity factor subunit 1 (1441 aa).

This sequence belongs to the CPSF1 family. CPSF is a heterotetramer composed of four distinct subunits 160, 100, 70 and 30 kDa.

It is found in the nucleus. Functionally, CPSF plays a key role in pre-mRNA 3'-end formation, recognizing the AAUAAA signal sequence and interacting with poly(A)polymerase and other factors to bring about cleavage and poly(A) addition. This subunit is involved in the RNA recognition step of the polyadenylation reaction. This is Probable cleavage and polyadenylation specificity factor subunit 1 from Oryza sativa subsp. japonica (Rice).